Consider the following 574-residue polypeptide: Proline--tRNA ligase (574 aa).

The protein belongs to the class-II aminoacyl-tRNA synthetase family. ProS type 1 subfamily. Homodimer.

The protein resides in the cytoplasm. The catalysed reaction is tRNA(Pro) + L-proline + ATP = L-prolyl-tRNA(Pro) + AMP + diphosphate. Catalyzes the attachment of proline to tRNA(Pro) in a two-step reaction: proline is first activated by ATP to form Pro-AMP and then transferred to the acceptor end of tRNA(Pro). As ProRS can inadvertently accommodate and process non-cognate amino acids such as alanine and cysteine, to avoid such errors it has two additional distinct editing activities against alanine. One activity is designated as 'pretransfer' editing and involves the tRNA(Pro)-independent hydrolysis of activated Ala-AMP. The other activity is designated 'posttransfer' editing and involves deacylation of mischarged Ala-tRNA(Pro). The misacylated Cys-tRNA(Pro) is not edited by ProRS. The chain is Proline--tRNA ligase from Nitratidesulfovibrio vulgaris (strain DP4) (Desulfovibrio vulgaris).